Consider the following 490-residue polypeptide: B3 domain-containing protein REM14 (490 aa).

3 consecutive DNA-binding regions (TF-B3) follow at residues 3–95 (NQHF…LGPS), 130–226 (CFSA…LPKG), and 236–333 (CFVA…LSNE). The disordered stretch occupies residues 343-367 (NEVESLSTDQESHEESSHNEKISRR). The segment covering 352-364 (QESHEESSHNEKI) has biased composition (basic and acidic residues). A DNA-binding region (TF-B3 4) is located at residues 387–484 (FVTLNLTPYN…TSCVLKFCSK (98 aa)).

The protein resides in the nucleus. This chain is B3 domain-containing protein REM14 (REM14), found in Arabidopsis thaliana (Mouse-ear cress).